Reading from the N-terminus, the 92-residue chain is MTIENDYAKLKELMEFPAKMTFKVAGINREGLAQDLIQVVQKYIKGDYIPKEKRSSKGTYNSVSIDIIAENFDQVETLYKELAKVEGVKMVI.

It belongs to the UPF0250 family.

In Haemophilus influenzae (strain PittEE), this protein is UPF0250 protein CGSHiEE_03170.